The following is a 2531-amino-acid chain: Probable polyketide synthase 26 (2531 aa).

A Ketosynthase family 3 (KS3) domain is found at 10–433; that stretch reads QEDIAIIGFR…GSNCCLVLTE (424 aa). Active-site for beta-ketoacyl synthase activity residues include Cys174, His316, and His356. An acyl/malonyl transferase region spans residues 620 to 653; it reads GINPSFIVGHSLGELPMAFCSGMIDFDTVCYLLY. The active-site For acyl/malonyl transferase activity is Ser630. The tract at residues 915–1036 is N-terminal hotdog fold; that stretch reads MDTLGFSNEK…ANYHLSHRDD (122 aa). One can recognise a PKS/mFAS DH domain in the interval 915 to 1206; it reads MDTLGFSNEK…LKSLIPLKDP (292 aa). The active-site Proton acceptor; for dehydratase activity is His948. Residues 1055–1206 are C-terminal hotdog fold; the sequence is NLTKLSKNQF…LKSLIPLKDP (152 aa). Asp1117 functions as the Proton donor; for dehydratase activity in the catalytic mechanism. Residues 2431 to 2509 enclose the Carrier domain; the sequence is ASENPVKDLL…DNIKILTDSY (79 aa). Ser2468 carries the O-(pantetheine 4'-phosphoryl)serine modification.

It depends on pantetheine 4'-phosphate as a cofactor.

Probable polyketide synthase. In Dictyostelium discoideum (Social amoeba), this protein is Probable polyketide synthase 26 (pks26).